A 934-amino-acid polypeptide reads, in one-letter code: Glycine dehydrogenase (decarboxylating) (934 aa).

Lysine 687 carries the post-translational modification N6-(pyridoxal phosphate)lysine.

Belongs to the GcvP family. The glycine cleavage system is composed of four proteins: P, T, L and H. Requires pyridoxal 5'-phosphate as cofactor.

It carries out the reaction N(6)-[(R)-lipoyl]-L-lysyl-[glycine-cleavage complex H protein] + glycine + H(+) = N(6)-[(R)-S(8)-aminomethyldihydrolipoyl]-L-lysyl-[glycine-cleavage complex H protein] + CO2. Its function is as follows. The glycine cleavage system catalyzes the degradation of glycine. The P protein binds the alpha-amino group of glycine through its pyridoxal phosphate cofactor; CO(2) is released and the remaining methylamine moiety is then transferred to the lipoamide cofactor of the H protein. The sequence is that of Glycine dehydrogenase (decarboxylating) from Nocardia farcinica (strain IFM 10152).